The primary structure comprises 150 residues: MKVMATGAFDILHPGHGLYLEKAKELGGEDAVLAVVIARDSTVKKKKRIPVIDENQRLEMIKYLKPVDEAYIGHDGDMFEIVEEIKPDIIAIGFDQGHDVNKLQEELDKRGIKAKAMRVEAHRIADLDSTCKIIKKIRNSDFEEDYVNCD.

ATP-binding positions include 8–9 (AF), 13–16 (HPGH), Asp-95, and His-122.

This sequence belongs to the archaeal FAD synthase family. Homodimer. A divalent metal cation serves as cofactor.

It catalyses the reaction FMN + ATP + H(+) = FAD + diphosphate. Its pathway is cofactor biosynthesis; FAD biosynthesis; FAD from FMN: step 1/1. Catalyzes the transfer of the AMP portion of ATP to flavin mononucleotide (FMN) to produce flavin adenine dinucleotide (FAD) coenzyme. This Methanobrevibacter ruminantium (strain ATCC 35063 / DSM 1093 / JCM 13430 / OCM 146 / M1) (Methanobacterium ruminantium) protein is FAD synthase.